Consider the following 597-residue polypeptide: Protein IQ-DOMAIN 29 (597 aa).

The disordered stretch occupies residues 1-31; sequence MGKTPSPGKWIKSLLGKKSSKSSLEKGGEKL. 3 IQ domains span residues 106-134, 135-153, and 157-183; these read LEEA…GITR, VQAV…ATYS, and GIVK…QKTN. Residues 159 to 173 are calmodulin-binding; the sequence is VKVQALVRGKKARSS. Positions 264-271 match the Nuclear localization signal 1 motif; sequence KKRSFQAV. Disordered stretches follow at residues 268-379 and 407-597; these read FQAV…KKEI and LIPV…EWKR. The segment covering 289–300 has biased composition (low complexity); sequence STTANSSTSRST. Over residues 319 to 329 the composition is skewed to basic and acidic residues; that stretch reads ELSKIENDKSK. Positions 356-363 match the Nuclear localization signal 2 motif; that stretch reads HKKASLSN. The span at 414 to 463 shows a compositional bias: basic and acidic residues; sequence KESDLDKDEKSLVLDKPEQDELRTAERDDKAEEELKTAERDDSAEEKIQE. A compositionally biased stretch (polar residues) spans 467–480; the sequence is QISSENGNVASENT. Positions 481 to 500 are enriched in basic and acidic residues; the sequence is KPSDRRASLPAKIENHHQDD. Residues 572-584 show a composition bias toward polar residues; that stretch reads GSMNSDRSFSSSK. Basic and acidic residues predominate over residues 585–597; the sequence is DIGDKSTKAEWKR.

The protein belongs to the IQD family. As to quaternary structure, binds to multiple calmodulin (CaM) in the presence of Ca(2+) and CaM-like proteins.

Its subcellular location is the nucleus. The protein localises to the nucleus envelope. It localises to the cytoplasm. It is found in the cytoskeleton. The protein resides in the cell membrane. In terms of biological role, may be involved in cooperative interactions with calmodulins or calmodulin-like proteins. Recruits calmodulin proteins to microtubules, thus being a potential scaffold in cellular signaling and trafficking. May associate with nucleic acids and regulate gene expression at the transcriptional or post-transcriptional level. The sequence is that of Protein IQ-DOMAIN 29 from Arabidopsis thaliana (Mouse-ear cress).